The following is a 479-amino-acid chain: Alpha,alpha-trehalose-phosphate synthase [UDP-forming] 2 (479 aa).

D-glucose 6-phosphate contacts are provided by Y96 and D150. UDP contacts are provided by R287 and K292. 2 residues coordinate UDP-alpha-D-glucose: R287 and K292. Position 325 (R325) interacts with D-glucose 6-phosphate. Residues 363 to 364 (SV) and 390 to 394 (LVSFE) contribute to the UDP site. 386–394 (DGMNLVSFE) contributes to the UDP-alpha-D-glucose binding site.

Belongs to the glycosyltransferase 20 family.

It carries out the reaction D-glucose 6-phosphate + UDP-alpha-D-glucose = alpha,alpha-trehalose 6-phosphate + UDP + H(+). Its pathway is carbohydrate biosynthesis. In terms of biological role, synthase catalytic subunit of the trehalose synthase complex that catalyzes the production of trehalose from glucose-6-phosphate and UDP-alpha-D-glucose in a two step process. The disaccharide trehalose serves as a storage carbohydrate that is mobilized during conidial germination. Regulates the level of trehalose as a protectant for cell integrity during thermal and oxidative stress. This is Alpha,alpha-trehalose-phosphate synthase [UDP-forming] 2 from Aspergillus fumigatus (strain ATCC MYA-4609 / CBS 101355 / FGSC A1100 / Af293) (Neosartorya fumigata).